We begin with the raw amino-acid sequence, 151 residues long: Copper transporter 2 (151 aa).

A run of 2 helical transmembrane segments spans residues 42–62 (GARGGMYALAILFMFALAVLL) and 97–117 (VAYLIMLALMSFNGGVFLAIV).

This sequence belongs to the copper transporter (Ctr) (TC 1.A.56) family. SLC31A subfamily. In terms of assembly, self-interacts. Interacts with SWEET11 and COPT1.

Its subcellular location is the cell membrane. In terms of biological role, involved in the transport of copper, in cooperation with SWEET11 and COPT1. Contributes to the removal of copper (Cu) from xylem, and thus to the sensitivity toward bacterial pathogens such as X.oryzae pv. oryzae (Xoo). This Oryza sativa subsp. japonica (Rice) protein is Copper transporter 2 (COPT2).